The following is a 432-amino-acid chain: Neuropeptide FF receptor 1 (432 aa).

Residues 1–43 (MEAEPSQPPNGSWPLGQNGSDVETSMATSLTFSSYYQHSSPVA) lie on the Extracellular side of the membrane. N-linked (GlcNAc...) asparagine glycans are attached at residues N10 and N18. Residues 44–64 (AMFIAAYVLIFLLCMVGNTLV) form a helical membrane-spanning segment. Residues 65–80 (CFIVLKNRHMRTVTNM) lie on the Cytoplasmic side of the membrane. Residues 81–101 (FILNLAVSDLLVGIFCMPTTL) form a helical membrane-spanning segment. Topologically, residues 102-117 (VDNLITGWPFDNATCK) are extracellular. A glycan (N-linked (GlcNAc...) asparagine) is linked at N113. C116 and C203 form a disulfide bridge. Residues 118-138 (MSGLVQGMSVSASVFTLVAIA) form a helical membrane-spanning segment. Residues 139–158 (VERFRCIVHPFREKLTLRKA) are Cytoplasmic-facing. Residues 159-179 (LFTIAVIWALALLIMCPSAVT) traverse the membrane as a helical segment. The Extracellular segment spans residues 180 to 214 (LTVTREEHHFMLDARNRSYPLYSCWEAWPEKGMRK). N-linked (GlcNAc...) asparagine glycosylation is present at N195. The helical transmembrane segment at 215-235 (VYTAVLFAHIYLVPLALIVVM) threads the bilayer. Over 236 to 273 (YVRIARKLCQAPGPARDTEEAVAEGGRTSRRRARVVHM) the chain is Cytoplasmic. A helical membrane pass occupies residues 274–294 (LVMVALFFTLSWLPLWVLLLL). The Extracellular portion of the chain corresponds to 295–309 (IDYGELSELQLHLLS). Residues 310–330 (VYAFPLAHWLAFFHSSANPII) traverse the membrane as a helical segment. At 331 to 432 (YGYFNENFRR…MPLTIPAWNI (102 aa)) the chain is on the cytoplasmic side. Residues 380–406 (PSDSGLPSESGPSSGVPGPGRLPLRNG) are compositionally biased toward low complexity. Residues 380–422 (PSDSGLPSESGPSSGVPGPGRLPLRNGRVAHQDGPGEGPGCNH) form a disordered region.

The protein belongs to the G-protein coupled receptor 1 family. As to expression, expressed at high levels in the hypothalamus. Moderate levels found in the midbrain, thalamus, medulla oblongata, testis, eye, whole brain, cerebral cortex, striatum, hippocampus, cerebellum, optic nerve, placenta, spinal cord, pituitary gland and ovary.

It localises to the cell membrane. Its function is as follows. Receptor for NPAF (A-18-F-amide) and NPFF (F-8-F-amide) neuropeptides, also known as morphine-modulating peptides. Can also be activated by a variety of naturally occurring or synthetic FMRF-amide like ligands. This receptor mediates its action by association with G proteins that activate a phosphatidylinositol-calcium second messenger system. In Rattus norvegicus (Rat), this protein is Neuropeptide FF receptor 1 (Npffr1).